Here is a 149-residue protein sequence, read N- to C-terminus: Deoxyuridine 5'-triphosphate nucleotidohydrolase (149 aa).

Residues 68–70, asparagine 81, and 85–87 each bind substrate; these read RSG and LID.

Belongs to the dUTPase family. The cofactor is Mg(2+).

It carries out the reaction dUTP + H2O = dUMP + diphosphate + H(+). Its pathway is pyrimidine metabolism; dUMP biosynthesis; dUMP from dCTP (dUTP route): step 2/2. Its function is as follows. This enzyme is involved in nucleotide metabolism: it produces dUMP, the immediate precursor of thymidine nucleotides and it decreases the intracellular concentration of dUTP so that uracil cannot be incorporated into DNA. The chain is Deoxyuridine 5'-triphosphate nucleotidohydrolase from Nitrosospira multiformis (strain ATCC 25196 / NCIMB 11849 / C 71).